Here is a 545-residue protein sequence, read N- to C-terminus: Cytochrome bc1 complex cytochrome b subunit (545 aa).

Residues 54 to 74 (VCLYSFIIIILTGVYLTLFFH) form a helical membrane-spanning segment. Histidine 118 and histidine 132 together coordinate heme. 3 helical membrane-spanning segments follow: residues 122 to 142 (ALIF…TGAF), 150 to 170 (WLFG…GYSL), and 182 to 202 (FMEG…FFLF). Residues histidine 219 and histidine 234 each contribute to the heme site. The next 5 helical transmembrane spans lie at 220-240 (ILLL…LVFY), 269-289 (AGGF…IATI), 335-355 (LVLG…AIAV), 385-405 (FGVA…NDLW), and 413-433 (INAI…VAFI).

The protein belongs to the cytochrome b family. As to quaternary structure, the cytochrome bc1 complex is composed of a cytochrome b (QcrB), the Rieske iron-sulfur protein (QcrA) and a diheme cytochrome c (QcrC) subunit. The cofactor is heme.

It localises to the cell membrane. It carries out the reaction a quinol + 2 Fe(III)-[cytochrome c](out) = a quinone + 2 Fe(II)-[cytochrome c](out) + 2 H(+)(out). Functionally, cytochrome b subunit of the cytochrome bc1 complex, an essential component of the respiratory electron transport chain required for ATP synthesis. The bc1 complex catalyzes the oxidation of ubiquinol and the reduction of cytochrome c in the respiratory chain. The bc1 complex operates through a Q-cycle mechanism that couples electron transfer to generation of the proton gradient that drives ATP synthesis. The cytochrome b subunit contains two ubiquinol reactive sites: the oxidation (QP) site and the reduction (QN) site. The polypeptide is Cytochrome bc1 complex cytochrome b subunit (qcrB) (Streptomyces coelicolor (strain ATCC BAA-471 / A3(2) / M145)).